The sequence spans 64 residues: Conotoxin Ca5.3 (64 aa).

Residues 1 to 22 (MRCVPVFIILLLLIASAPGVDA) form the signal peptide. The propeptide occupies 23 to 48 (QPKTKYNAPLTSLHDNAKGILQEHWN). Position 61 is an isoleucine amide (Ile-61).

The protein belongs to the conotoxin T superfamily. In terms of processing, contains 2 disulfide bonds that can be either 'C1-C3, C2-C4' or 'C1-C4, C2-C3', since these disulfide connectivities have been observed for conotoxins with cysteine framework V (for examples, see AC P0DQQ7 and AC P81755). Expressed by the venom duct.

It localises to the secreted. The sequence is that of Conotoxin Ca5.3 from Conus caracteristicus (Characteristic cone).